We begin with the raw amino-acid sequence, 966 residues long: Isoleucine--tRNA ligase (966 aa).

Residues 1–16 (MSDDKRAKSDKNEKNK) show a composition bias toward basic and acidic residues. The disordered stretch occupies residues 1 to 24 (MSDDKRAKSDKNEKNKYPVNLLDT). The 'HIGH' region motif lies at 69 to 79 (PYANGDIHIGH). Glu-599 provides a ligand contact to L-isoleucyl-5'-AMP. The 'KMSKS' region signature appears at 640 to 644 (KMSKS). Lys-643 contributes to the ATP binding site. Zn(2+)-binding residues include Cys-929, Cys-932, Cys-949, and Cys-952.

It belongs to the class-I aminoacyl-tRNA synthetase family. IleS type 1 subfamily. In terms of assembly, monomer. Requires Zn(2+) as cofactor.

Its subcellular location is the cytoplasm. The enzyme catalyses tRNA(Ile) + L-isoleucine + ATP = L-isoleucyl-tRNA(Ile) + AMP + diphosphate. In terms of biological role, catalyzes the attachment of isoleucine to tRNA(Ile). As IleRS can inadvertently accommodate and process structurally similar amino acids such as valine, to avoid such errors it has two additional distinct tRNA(Ile)-dependent editing activities. One activity is designated as 'pretransfer' editing and involves the hydrolysis of activated Val-AMP. The other activity is designated 'posttransfer' editing and involves deacylation of mischarged Val-tRNA(Ile). The chain is Isoleucine--tRNA ligase from Cupriavidus taiwanensis (strain DSM 17343 / BCRC 17206 / CCUG 44338 / CIP 107171 / LMG 19424 / R1) (Ralstonia taiwanensis (strain LMG 19424)).